Reading from the N-terminus, the 632-residue chain is Phospholipid:diacylglycerol acyltransferase (632 aa).

Over residues 1–15 (MASSKKSKTHKKKKE) the composition is skewed to basic residues. Residues 1 to 47 (MASSKKSKTHKKKKEVKSPIDLPNSKKPTRALSEQPSASETQSVSNK) are disordered. The Cytoplasmic portion of the chain corresponds to 1 to 56 (MASSKKSKTHKKKKEVKSPIDLPNSKKPTRALSEQPSASETQSVSNKSRKSKFGKR). Positions 32 to 46 (LSEQPSASETQSVSN) are enriched in polar residues. Residues 57-77 (LNFILGAILGICGAFFFAVGD) form a helical membrane-spanning segment. Topologically, residues 78-632 (DNAVFDPATL…NEINLDKPRN (555 aa)) are lumenal. Residue Asp-136 coordinates substrate. The Acyl-ester intermediate role is filled by Ser-293. Met-294 provides a ligand contact to substrate. Residues Asp-535 and His-586 each act as charge relay system in the active site.

This sequence belongs to the AB hydrolase superfamily. Lipase family.

The protein resides in the endoplasmic reticulum membrane. The enzyme catalyses a glycerophospholipid + a 1,2-diacyl-sn-glycerol = a monoacylglycerophospholipid + a triacyl-sn-glycerol. Its pathway is glycerolipid metabolism; triacylglycerol biosynthesis. In terms of biological role, catalyzes triacylglycerol (TAG) formation by an acyl-CoA independent pathway. The enzyme specifically transfers acyl groups from the sn-2 position of a phospholipid to diacylglycerol (DAG), thus forming an sn-1-lysophospholipid. Plays a major role in triacylglycerol formation at log phase. Involved in lipid particle synthesis from the endoplasmic reticulum, promoting localized TAG production at discrete ER subdomains. This Schizosaccharomyces pombe (strain 972 / ATCC 24843) (Fission yeast) protein is Phospholipid:diacylglycerol acyltransferase (plh1).